Consider the following 385-residue polypeptide: Transcription termination factor 2, mitochondrial (385 aa).

The transit peptide at 1-35 (MLWKLLLRSQSCRLCSFRKMRSPPKYRPFLACFTY) directs the protein to the mitochondrion.

The protein belongs to the mTERF family. Monomer. Expressed in skeletal muscle, heart, liver and pancreas.

It is found in the mitochondrion. Its subcellular location is the mitochondrion matrix. It localises to the mitochondrion nucleoid. Functionally, binds mitochondrial DNA and plays a role in the regulation of transcription of mitochondrial mRNA and rRNA species. The polypeptide is Transcription termination factor 2, mitochondrial (MTERF2) (Homo sapiens (Human)).